The primary structure comprises 302 residues: Zygote arrest protein 2.S (302 aa).

3 disordered regions span residues 15–46, 88–117, and 138–195; these read YGGNFGQNPHRPQAFPKNKQAAWKSNKSSEPP, VDTGVQCSLGPRTLRRPPPPPSSPVKPTDC, and LPQG…EPNK. Positions 159-178 are enriched in basic and acidic residues; that stretch reads LKDRGPSPEEKEPETKEALE. Residues 203-288 form a 3CxxC-type zinc finger; the sequence is QKYGYFHCKD…QELCGRCKNK (86 aa).

The protein belongs to the ZAR1 family. Oocyte-specific.

The protein resides in the cytoplasm. It is found in the cytoplasmic ribonucleoprotein granule. Functionally, mRNA-binding protein required for maternal mRNA storage, translation and degradation during oocyte maturation. Probably promotes formation of some phase-separated membraneless compartment that stores maternal mRNAs in oocytes: acts by undergoing liquid-liquid phase separation upon binding to maternal mRNAs. Binds to the 3'-UTR of maternal mRNAs, inhibiting their translation. This is Zygote arrest protein 2.S from Xenopus laevis (African clawed frog).